Consider the following 766-residue polypeptide: MQLEATHQKENHLSPLASFIFPDFRALFNIGFNLYSNINYKEVDINGFEIYIVEQWAAQRKISTLITSYTGNLQDTISAVEVALPEDPEEWPCCLKKYHEELLKFSSPKKTAKGTLFVTNLSSFKSTLNLLHVECGNLKKIWKNFKTNYDLKRLHCGGRSAQLLKKTPSASIAKFAQLYKFPNSAFSHEITSDFQQPSLQNDNSSISSIENIPVNHCPVVELTTLVQISLSYFALFEYKKERDGLLCNGTKQSLEKWWEIYGKRYHGIDKPKNETILGPTTVASLLSLVLTCYFKLMVEDCMSAKDPFDEEEFYSGLYAFQKKYGLSKNNKQTSLDELTIDKLFEVSSKTSNKDIFKFKKVVKSTVQDMTGKGNFMHLSNEILTTDLDTLVKNIHGGSLGKLWKGRSASRKETCMVWERKTFLSFKFERGDPSLQLENNELFYGTSVPSEQLTTSNKEDSDTQPTKRNSIYDIANGSKSSLSISSMFCNYDETRYKSTNNLNRAYRGEYFRRNSIPFCNDGIHDTKKISADLNKIDGLYRCNSYSEVQNAIELWSLPFDSSVIRLARDLLKIQSLMSVQRQLDEIRDGYLGKNSQRSYQNDLMFRQSLNKLQEMCERCKRGSNEFHWEYGNMQNKQQILESEKKDMKSLSSKLKYNVRILDRRVRDVEASVDHFDRKLEDVRKKLLEQNNSKDISMALESPCDKFEFDSFMDSIVQSQQTKYEGLCFKILDKKSLRKLKKEFWKWSTWTFDTFLYKNRPNKEKDTL.

The interval 447-469 (VPSEQLTTSNKEDSDTQPTKRNS) is disordered. At Ser514 the chain carries Phosphoserine.

This sequence to yeast STB2.

Its function is as follows. Binds to SIN3. The sequence is that of Protein STB6 (STB6) from Saccharomyces cerevisiae (strain ATCC 204508 / S288c) (Baker's yeast).